The sequence spans 75 residues: Translation initiation factor IF-1 (75 aa).

In terms of domain architecture, S1-like spans Met1 to Lys75.

The protein belongs to the IF-1 family. Component of the 30S ribosomal translation pre-initiation complex which assembles on the 30S ribosome in the order IF-2 and IF-3, IF-1 and N-formylmethionyl-tRNA(fMet); mRNA recruitment can occur at any time during PIC assembly.

The protein resides in the cytoplasm. One of the essential components for the initiation of protein synthesis. Stabilizes the binding of IF-2 and IF-3 on the 30S subunit to which N-formylmethionyl-tRNA(fMet) subsequently binds. Helps modulate mRNA selection, yielding the 30S pre-initiation complex (PIC). Upon addition of the 50S ribosomal subunit IF-1, IF-2 and IF-3 are released leaving the mature 70S translation initiation complex. In Mesomycoplasma hyopneumoniae (strain 232) (Mycoplasma hyopneumoniae), this protein is Translation initiation factor IF-1.